Reading from the N-terminus, the 397-residue chain is Chorismate synthase (397 aa).

2 residues coordinate NADP(+): arginine 40 and arginine 46. FMN-binding positions include 129–131 (RSS), 257–258 (QA), glycine 302, 317–321 (KPISS), and arginine 343.

Belongs to the chorismate synthase family. Homotetramer. FMNH2 serves as cofactor.

The catalysed reaction is 5-O-(1-carboxyvinyl)-3-phosphoshikimate = chorismate + phosphate. The protein operates within metabolic intermediate biosynthesis; chorismate biosynthesis; chorismate from D-erythrose 4-phosphate and phosphoenolpyruvate: step 7/7. Functionally, catalyzes the anti-1,4-elimination of the C-3 phosphate and the C-6 proR hydrogen from 5-enolpyruvylshikimate-3-phosphate (EPSP) to yield chorismate, which is the branch point compound that serves as the starting substrate for the three terminal pathways of aromatic amino acid biosynthesis. This reaction introduces a second double bond into the aromatic ring system. The protein is Chorismate synthase of Chlorobium phaeobacteroides (strain DSM 266 / SMG 266 / 2430).